Here is a 571-residue protein sequence, read N- to C-terminus: Proline--tRNA ligase (571 aa).

The protein belongs to the class-II aminoacyl-tRNA synthetase family. ProS type 1 subfamily. In terms of assembly, homodimer.

Its subcellular location is the cytoplasm. The catalysed reaction is tRNA(Pro) + L-proline + ATP = L-prolyl-tRNA(Pro) + AMP + diphosphate. In terms of biological role, catalyzes the attachment of proline to tRNA(Pro) in a two-step reaction: proline is first activated by ATP to form Pro-AMP and then transferred to the acceptor end of tRNA(Pro). As ProRS can inadvertently accommodate and process non-cognate amino acids such as alanine and cysteine, to avoid such errors it has two additional distinct editing activities against alanine. One activity is designated as 'pretransfer' editing and involves the tRNA(Pro)-independent hydrolysis of activated Ala-AMP. The other activity is designated 'posttransfer' editing and involves deacylation of mischarged Ala-tRNA(Pro). The misacylated Cys-tRNA(Pro) is not edited by ProRS. The polypeptide is Proline--tRNA ligase (Mannheimia succiniciproducens (strain KCTC 0769BP / MBEL55E)).